We begin with the raw amino-acid sequence, 461 residues long: Steroidogenic factor 1 (461 aa).

The segment at residues D10–A85 is a DNA-binding region (nuclear receptor). An NR C4-type zinc finger spans residues C13 to C33. N6-acetyllysine occurs at positions 34, 38, and 72. The NR C4-type zinc finger occupies C49 to C73. A Glycyl lysine isopeptide (Lys-Gly) (interchain with G-Cter in SUMO) cross-link involves residue K119. The interval K119–A153 is disordered. Over residues M126–M139 the composition is skewed to pro residues. Residue K194 forms a Glycyl lysine isopeptide (Lys-Gly) (interchain with G-Cter in SUMO) linkage. Residue S203 is modified to Phosphoserine; by CDK7. The 238-residue stretch at G222–K459 folds into the NR LBD domain. Residues G341, Y436, and K440 each contribute to the a 1,2-diacyl-sn-glycero-3-phosphocholine site.

It belongs to the nuclear hormone receptor family. NR5 subfamily. In terms of assembly, binds DNA as a monomer. Part of a complex consisting of SFPQ, NONO and NR5A1. Interacts with NR0B2. Interacts with DGKQ and CDK7. Binds to and activated by HIPK3. Acetylation stimulates the transcriptional activity. In terms of processing, sumoylation reduces CDK7-mediated phosphorylation on Ser-203. Post-translationally, phosphorylated on Ser-203 by CDK7. This phosphorylation promotes transcriptional activity.

It localises to the nucleus. Its function is as follows. Transcriptional activator. Seems to be essential for sexual differentiation and formation of the primary steroidogenic tissues. Binds to the Ad4 site found in the promoter region of steroidogenic P450 genes such as CYP11A, CYP11B and CYP21B. Also regulates the AMH/Muellerian inhibiting substance gene as well as the AHCH and STAR genes. 5'-YCAAGGYC-3' and 5'-RRAGGTCA-3' are the consensus sequences for the recognition by NR5A1. The SFPQ-NONO-NR5A1 complex binds to the CYP17 promoter and regulates basal and cAMP-dependent transcriptional activity. Binds phospholipids with a phosphatidylinositol (PI) headgroup, in particular PI(3,4)P2 and PI(3,4,5)P3. Activated by the phosphorylation of NR5A1 by HIPK3 leading to increased steroidogenic gene expression upon cAMP signaling pathway stimulation. In Equus caballus (Horse), this protein is Steroidogenic factor 1 (NR5A1).